Consider the following 617-residue polypeptide: Dihydroxy-acid dehydratase (617 aa).

D81 contacts Mg(2+). C122 provides a ligand contact to [2Fe-2S] cluster. Residues D123 and K124 each coordinate Mg(2+). Position 124 is an N6-carboxylysine (K124). Position 195 (C195) interacts with [2Fe-2S] cluster. Residue E490 coordinates Mg(2+). S516 acts as the Proton acceptor in catalysis.

The protein belongs to the IlvD/Edd family. In terms of assembly, homodimer. Requires [2Fe-2S] cluster as cofactor. Mg(2+) serves as cofactor.

The catalysed reaction is (2R)-2,3-dihydroxy-3-methylbutanoate = 3-methyl-2-oxobutanoate + H2O. The enzyme catalyses (2R,3R)-2,3-dihydroxy-3-methylpentanoate = (S)-3-methyl-2-oxopentanoate + H2O. It functions in the pathway amino-acid biosynthesis; L-isoleucine biosynthesis; L-isoleucine from 2-oxobutanoate: step 3/4. The protein operates within amino-acid biosynthesis; L-valine biosynthesis; L-valine from pyruvate: step 3/4. Its function is as follows. Functions in the biosynthesis of branched-chain amino acids. Catalyzes the dehydration of (2R,3R)-2,3-dihydroxy-3-methylpentanoate (2,3-dihydroxy-3-methylvalerate) into 2-oxo-3-methylpentanoate (2-oxo-3-methylvalerate) and of (2R)-2,3-dihydroxy-3-methylbutanoate (2,3-dihydroxyisovalerate) into 2-oxo-3-methylbutanoate (2-oxoisovalerate), the penultimate precursor to L-isoleucine and L-valine, respectively. The protein is Dihydroxy-acid dehydratase of Acidiphilium cryptum (strain JF-5).